A 318-amino-acid chain; its full sequence is NADH-ubiquinone oxidoreductase chain 1 (318 aa).

The next 8 membrane-spanning stretches (helical) occupy residues 2–22 (FMLN…FLTL), 68–88 (ITMF…MWIP), 100–120 (LGVL…LWSG), 147–167 (AIIL…TLII), 171–191 (YIWL…STLA), 217–237 (GGPF…MNAL), 254–273 (LYTT…FLWI), and 294–314 (LPLT…MAGI).

This sequence belongs to the complex I subunit 1 family.

Its subcellular location is the mitochondrion inner membrane. The catalysed reaction is a ubiquinone + NADH + 5 H(+)(in) = a ubiquinol + NAD(+) + 4 H(+)(out). Core subunit of the mitochondrial membrane respiratory chain NADH dehydrogenase (Complex I) that is believed to belong to the minimal assembly required for catalysis. Complex I functions in the transfer of electrons from NADH to the respiratory chain. The immediate electron acceptor for the enzyme is believed to be ubiquinone. The chain is NADH-ubiquinone oxidoreductase chain 1 (MT-ND1) from Hsunycteris thomasi (Thomas's nectar bat).